Reading from the N-terminus, the 129-residue chain is MEIVSDKKISEKGIASAAELLYKGAKMLAHSCPECKMPLFEKDGKIFCPSCGREVVIEEDSAAKAESEEKPPESTKPAVKADYDEAVEKIEMAISKVCDMMVESRSVEEVRVLSDSLEKLVDALKKLRE.

The interval 61–80 (SAAKAESEEKPPESTKPAVK) is disordered.

The protein belongs to the UPF0148 family.

This chain is UPF0148 protein AF_2370, found in Archaeoglobus fulgidus (strain ATCC 49558 / DSM 4304 / JCM 9628 / NBRC 100126 / VC-16).